Reading from the N-terminus, the 405-residue chain is Tyrosine--tRNA ligase (405 aa).

Tyr-35 lines the L-tyrosine pocket. Residues 40–49 carry the 'HIGH' region motif; the sequence is ATSSSLHIGH. Tyr-166 and Gln-170 together coordinate L-tyrosine. The short motif at 226-230 is the 'KMSKS' region element; sequence KMGKS. Lys-229 serves as a coordination point for ATP. One can recognise an S4 RNA-binding domain in the interval 340 to 404; sequence VLLINLMLDS…VGKKKFLRIV (65 aa).

This sequence belongs to the class-I aminoacyl-tRNA synthetase family. TyrS type 1 subfamily. Homodimer.

Its subcellular location is the cytoplasm. The catalysed reaction is tRNA(Tyr) + L-tyrosine + ATP = L-tyrosyl-tRNA(Tyr) + AMP + diphosphate + H(+). In terms of biological role, catalyzes the attachment of tyrosine to tRNA(Tyr) in a two-step reaction: tyrosine is first activated by ATP to form Tyr-AMP and then transferred to the acceptor end of tRNA(Tyr). In Borreliella afzelii (strain PKo) (Borrelia afzelii), this protein is Tyrosine--tRNA ligase.